We begin with the raw amino-acid sequence, 361 residues long: Fructose-bisphosphate aldolase (361 aa).

A D-glyceraldehyde 3-phosphate-binding site is contributed by Ser-63. The active-site Proton donor is Asp-110. 4 residues coordinate Zn(2+): His-111, Asp-145, Glu-175, and His-227. Gly-228 is a dihydroxyacetone phosphate binding site. His-266 serves as a coordination point for Zn(2+). Dihydroxyacetone phosphate contacts are provided by residues 267–269 (GGS) and 288–291 (NLDT).

This sequence belongs to the class II fructose-bisphosphate aldolase family. Homodimer. Requires Zn(2+) as cofactor.

It catalyses the reaction beta-D-fructose 1,6-bisphosphate = D-glyceraldehyde 3-phosphate + dihydroxyacetone phosphate. The protein operates within carbohydrate degradation; glycolysis; D-glyceraldehyde 3-phosphate and glycerone phosphate from D-glucose: step 4/4. Functionally, catalyzes the aldol condensation of dihydroxyacetone phosphate (DHAP or glycerone-phosphate) with glyceraldehyde 3-phosphate (G3P) to form fructose 1,6-bisphosphate (FBP) in gluconeogenesis and the reverse reaction in glycolysis. This Kluyveromyces lactis (strain ATCC 8585 / CBS 2359 / DSM 70799 / NBRC 1267 / NRRL Y-1140 / WM37) (Yeast) protein is Fructose-bisphosphate aldolase (FBA1).